The chain runs to 277 residues: Undecaprenyl-diphosphatase (277 aa).

5 helical membrane passes run 83–103 (FALNIIIAFLPAALLGLVFAS), 109–129 (LFAPVPVAIAFIVGGFIILWI), 188–208 (ATEFSFFLAIPTLMGATVYSV), 218–238 (ADIPLFGLGGFAAFVSAFLCV), and 256–276 (YRIVFGLFVLLSAYYGWVVWA).

Belongs to the UppP family.

It localises to the cell inner membrane. It carries out the reaction di-trans,octa-cis-undecaprenyl diphosphate + H2O = di-trans,octa-cis-undecaprenyl phosphate + phosphate + H(+). Functionally, catalyzes the dephosphorylation of undecaprenyl diphosphate (UPP). Confers resistance to bacitracin. The polypeptide is Undecaprenyl-diphosphatase (Janthinobacterium sp. (strain Marseille) (Minibacterium massiliensis)).